Reading from the N-terminus, the 355-residue chain is Peptide chain release factor 1 (355 aa).

Gln230 bears the N5-methylglutamine mark.

The protein belongs to the prokaryotic/mitochondrial release factor family. In terms of processing, methylated by PrmC. Methylation increases the termination efficiency of RF1.

It is found in the cytoplasm. In terms of biological role, peptide chain release factor 1 directs the termination of translation in response to the peptide chain termination codons UAG and UAA. The polypeptide is Peptide chain release factor 1 (Geobacter sulfurreducens (strain ATCC 51573 / DSM 12127 / PCA)).